The following is a 218-amino-acid chain: MKTEIQEIVTRLDQQSNKGEGGESMKWLFRPLLQMLAGGESVTIEDMATTTGKPVEEVKKVLQSLPSVEIDEQGRVVGLGLTLIPTPHHFTVDGKQLYAWCALDTLIFPALIGRSVNIESPCHSTGEPIRLNVEPDHIVSVEPSTAVVSIVTPDDMSSIRTAFCNEVHFFSSPNAAEDWLDQHPGGKVLSVEDAFELGRLMGTRYEESRPANGSCCHI.

The protein belongs to the MerB family.

It carries out the reaction an alkylmercury + H(+) = an alkane + Hg(2+). In terms of biological role, cleaves the carbon-mercury bond of organomercurials such as phenylmercuric acetate. One product is Hg(2+), which is subsequently detoxified by the mercuric reductase. In Clostridium butyricum, this protein is Alkylmercury lyase.